Reading from the N-terminus, the 386-residue chain is Cytochrome b (386 aa).

4 helical membrane passes run 32–52 (FGSL…TLAM), 76–98 (WLIR…LHVG), 113–133 (TWII…LGYV), and 179–199 (FFAL…MHLI). The heme b site is built by His82 and His96. Heme b-binding residues include His183 and His197. His202 provides a ligand contact to a ubiquinone. 4 helical membrane passes run 226-246 (YIFK…LFVF), 290-310 (LLGV…PITD), 322-342 (LSKV…QLGA), and 349-369 (FIEF…VIMP).

Belongs to the cytochrome b family. In terms of assembly, fungal cytochrome b-c1 complex contains 10 subunits; 3 respiratory subunits, 2 core proteins and 5 low-molecular weight proteins. Cytochrome b-c1 complex is a homodimer. Heme b is required as a cofactor.

The protein resides in the mitochondrion inner membrane. Component of the ubiquinol-cytochrome c reductase complex (complex III or cytochrome b-c1 complex) that is part of the mitochondrial respiratory chain. The b-c1 complex mediates electron transfer from ubiquinol to cytochrome c. Contributes to the generation of a proton gradient across the mitochondrial membrane that is then used for ATP synthesis. In Talaromyces marneffei (Penicillium marneffei), this protein is Cytochrome b (cob).